A 176-amino-acid chain; its full sequence is HTH-type transcriptional regulator DctR (176 aa).

The region spanning 109–174 (VPEAAVSLSR…ELVRHQHIDY (66 aa)) is the HTH luxR-type domain. Positions 133-152 (TEDILEKLKISLKTFYCHKH) form a DNA-binding region, H-T-H motif.

Its function is as follows. May act as a transcriptional regulator of dctA. The chain is HTH-type transcriptional regulator DctR (dctR) from Escherichia coli (strain K12).